A 352-amino-acid chain; its full sequence is MLSLQTIAKMAVATNTYSKCHYPILKVFGLWWKNNTLNGPIKICNHCNNIMVGEYPMCYNHGMSLDIALIRAVKERNMSLVQLFTEWGGNIDYGALCANTPSMQRLCESLGAKPPKGRMYMDTLIHFSDTLNDNDLIRGYEIFDDNSVLDCVNLIRLKIMLTLKARISLMEQLDQIALKQLLQRYWYAMAVQHNLTIAIHYFDNHIPNIKPFSLRCALYFNDPFKIHDACRTVNMDPNEMMNIACQQDLNFQSIYYCYLLGADINQAMLMSLKYGHLSNMWFCIDLGADAFKEAGVLAGKKNRRVLQYILGLNIFKRELIPPCKDPDPYQIQILLKNYILKNVSTVFTYYCQ.

It belongs to the asfivirus MGF 360 family.

Plays a role in virus cell tropism, and may be required for efficient virus replication in macrophages. The sequence is that of Protein MGF 360-16R from African swine fever virus (isolate Tick/South Africa/Pretoriuskop Pr4/1996) (ASFV).